The chain runs to 429 residues: S-adenosylmethionine synthase (429 aa).

H14 serves as a coordination point for ATP. D16 is a binding site for Mg(2+). E42 is a K(+) binding site. Residues E55 and Q98 each coordinate L-methionine. The tract at residues 98-108 is flexible loop; the sequence is QSADINRGVDR. ATP-binding positions include 165-167, 252-253, D261, 267-268, A284, and K288; these read DAK, KF, and RK. An L-methionine-binding site is contributed by D261. K292 provides a ligand contact to L-methionine.

The protein belongs to the AdoMet synthase family. Homotetramer; dimer of dimers. The cofactor is Mg(2+). It depends on K(+) as a cofactor.

It localises to the cytoplasm. The enzyme catalyses L-methionine + ATP + H2O = S-adenosyl-L-methionine + phosphate + diphosphate. It participates in amino-acid biosynthesis; S-adenosyl-L-methionine biosynthesis; S-adenosyl-L-methionine from L-methionine: step 1/1. Its function is as follows. Catalyzes the formation of S-adenosylmethionine (AdoMet) from methionine and ATP. The overall synthetic reaction is composed of two sequential steps, AdoMet formation and the subsequent tripolyphosphate hydrolysis which occurs prior to release of AdoMet from the enzyme. In Porphyromonas gingivalis (strain ATCC 33277 / DSM 20709 / CIP 103683 / JCM 12257 / NCTC 11834 / 2561), this protein is S-adenosylmethionine synthase.